The sequence spans 347 residues: Biotin synthase (347 aa).

The region spanning 40–258 (AQVQVSTLLS…IAVARIAMPR (219 aa)) is the Radical SAM core domain. [4Fe-4S] cluster contacts are provided by Cys-55, Cys-59, and Cys-62. [2Fe-2S] cluster contacts are provided by Cys-99, Cys-130, Cys-190, and Arg-262.

This sequence belongs to the radical SAM superfamily. Biotin synthase family. In terms of assembly, homodimer. The cofactor is [4Fe-4S] cluster. [2Fe-2S] cluster is required as a cofactor.

The enzyme catalyses (4R,5S)-dethiobiotin + (sulfur carrier)-SH + 2 reduced [2Fe-2S]-[ferredoxin] + 2 S-adenosyl-L-methionine = (sulfur carrier)-H + biotin + 2 5'-deoxyadenosine + 2 L-methionine + 2 oxidized [2Fe-2S]-[ferredoxin]. It functions in the pathway cofactor biosynthesis; biotin biosynthesis; biotin from 7,8-diaminononanoate: step 2/2. Functionally, catalyzes the conversion of dethiobiotin (DTB) to biotin by the insertion of a sulfur atom into dethiobiotin via a radical-based mechanism. In Stenotrophomonas maltophilia (strain K279a), this protein is Biotin synthase.